The chain runs to 743 residues: Isocitrate dehydrogenase [NADP] 2 (743 aa).

Residues N87 and S89 each coordinate NADP(+). Positions 134, 137, 141, 147, and 257 each coordinate D-threo-isocitrate. N137 is an NADP(+) binding site. Residue D352 coordinates Mg(2+). The D-threo-isocitrate site is built by Y422 and R549. Mg(2+) contacts are provided by D550 and D554. S587, H591, R602, D604, and R651 together coordinate NADP(+).

The protein belongs to the monomeric-type IDH family. As to quaternary structure, monomer. It depends on Mg(2+) as a cofactor. The cofactor is Mn(2+).

The catalysed reaction is D-threo-isocitrate + NADP(+) = 2-oxoglutarate + CO2 + NADPH. Its function is as follows. Catalyzes the oxidative decarboxylation of isocitrate to 2-oxoglutarate and carbon dioxide with the concomitant reduction of NADP(+). The protein is Isocitrate dehydrogenase [NADP] 2 (icd2) of Colwellia maris.